A 304-amino-acid polypeptide reads, in one-letter code: uncharacterized protein (304 aa).

The N-terminal stretch at 1 to 15 (MTRPRPPLGPAMAGA) is a signal peptide. In terms of domain architecture, Thioredoxin spans 28 to 151 (NAAASTDADR…LSRWVDSLLS (124 aa)).

This is an uncharacterized protein from Mycobacterium bovis (strain ATCC BAA-935 / AF2122/97).